The primary structure comprises 93 residues: Phosphoribosyl-ATP pyrophosphatase (93 aa).

This sequence belongs to the PRA-PH family.

Its subcellular location is the cytoplasm. The catalysed reaction is 1-(5-phospho-beta-D-ribosyl)-ATP + H2O = 1-(5-phospho-beta-D-ribosyl)-5'-AMP + diphosphate + H(+). Its pathway is amino-acid biosynthesis; L-histidine biosynthesis; L-histidine from 5-phospho-alpha-D-ribose 1-diphosphate: step 2/9. This is Phosphoribosyl-ATP pyrophosphatase from Mycolicibacterium smegmatis (strain ATCC 700084 / mc(2)155) (Mycobacterium smegmatis).